A 674-amino-acid polypeptide reads, in one-letter code: DNA ligase (674 aa).

Residues 42-46, 91-92, and glutamate 121 each bind NAD(+); these read DNVYD and SM. The N6-AMP-lysine intermediate role is filled by lysine 123. The NAD(+) site is built by arginine 144, glutamate 178, lysine 294, and lysine 318. Zn(2+) is bound by residues cysteine 412, cysteine 415, cysteine 430, and cysteine 435. Residues 596–674 form the BRCT domain; that stretch reads VKDSFVAGKT…ETELLANLKD (79 aa).

The protein belongs to the NAD-dependent DNA ligase family. LigA subfamily. It depends on Mg(2+) as a cofactor. Mn(2+) is required as a cofactor.

It catalyses the reaction NAD(+) + (deoxyribonucleotide)n-3'-hydroxyl + 5'-phospho-(deoxyribonucleotide)m = (deoxyribonucleotide)n+m + AMP + beta-nicotinamide D-nucleotide.. Functionally, DNA ligase that catalyzes the formation of phosphodiester linkages between 5'-phosphoryl and 3'-hydroxyl groups in double-stranded DNA using NAD as a coenzyme and as the energy source for the reaction. It is essential for DNA replication and repair of damaged DNA. This Lacticaseibacillus paracasei (strain ATCC 334 / BCRC 17002 / CCUG 31169 / CIP 107868 / KCTC 3260 / NRRL B-441) (Lactobacillus paracasei) protein is DNA ligase.